Consider the following 483-residue polypeptide: Auxin transporter-like protein 2 (483 aa).

Residues 1-53 (MENGEKAAETVVVGNYVEMEKDGKALDIKSKLSDMFWHGGSAYDAWFSCASNQ) are Cytoplasmic-facing. The helical transmembrane segment at 54–71 (VAQVLLTLPYSFSQLGML) threads the bilayer. Over 72 to 73 (SG) the chain is Extracellular. The helical transmembrane segment at 74–94 (ILFQLFYGILGSWTAYLISIL) threads the bilayer. The Cytoplasmic portion of the chain corresponds to 95–130 (YVEYRTRKEREKVNFRNHVIQWFEVLDGLLGKHWRN). A helical transmembrane segment spans residues 131-151 (VGLAFNCTFLLFGSVIQLIAC). The Extracellular segment spans residues 152–166 (ASNIYYINDNLDKRT). The chain crosses the membrane as a helical span at residues 167–187 (WTYIFGACCATTVFIPSFHNY). Residues 188–190 (RIW) lie on the Cytoplasmic side of the membrane. Residues 191 to 211 (SFLGLLMTTYTAWYLTIASIL) form a helical membrane-spanning segment. The Extracellular segment spans residues 212-226 (HGQVEGVKHSGPSKL). Residues 227 to 247 (VLYFTGATNILYTFGGHAVTV) traverse the membrane as a helical segment. The Cytoplasmic segment spans residues 248-261 (EIMHAMWKPQKFKS). Residues 262-282 (IYLFATLYVLTLTLPSASAVY) traverse the membrane as a helical segment. The Extracellular segment spans residues 283–306 (WAFGDLLLNHSNAFALLPKNLYRD). Residue Asn291 is glycosylated (N-linked (GlcNAc...) asparagine). Residues 307 to 327 (FAVVLMLIHQFITFGFACTPL) form a helical membrane-spanning segment. Residues 328 to 350 (YFVWEKLIGMHECRSMCKRAAAR) lie on the Cytoplasmic side of the membrane. A helical transmembrane segment spans residues 351–371 (LPVVIPIWFLAIIFPFFGPIN). Residues 372–374 (STV) lie on the Extracellular side of the membrane. A helical membrane pass occupies residues 375 to 395 (GSLLVSFTVYIIPALAHIFTF). At 396-422 (RSSAARENAVEQPPRFLGRWTGAFTIN) the chain is on the cytoplasmic side. A helical transmembrane segment spans residues 423 to 443 (AFIVVWVFIVGFGFGGWASMI). Residues 444–483 (NFVHQIDTFGLFTKCYQCPPPVMVSPPPISHPHFNHTHGL) are Extracellular-facing. N-linked (GlcNAc...) asparagine glycosylation is present at Asn478.

It belongs to the amino acid/polyamine transporter 2 family. Amino acid/auxin permease (AAAP) (TC 2.A.18.1) subfamily.

It is found in the cell membrane. Carrier protein involved in proton-driven auxin influx. Mediates the formation of auxin gradient from developing leaves (site of auxin biosynthesis) to tips by contributing to the loading of auxin in vascular tissues and facilitating acropetal (base to tip) auxin transport within inner tissues of the root apex, and basipetal (tip to base) auxin transport within outer tissues of the root apex. The sequence is that of Auxin transporter-like protein 2 (LAX2) from Arabidopsis thaliana (Mouse-ear cress).